A 254-amino-acid chain; its full sequence is 3-deoxy-manno-octulosonate cytidylyltransferase (254 aa).

The protein belongs to the KdsB family.

The protein resides in the cytoplasm. The catalysed reaction is 3-deoxy-alpha-D-manno-oct-2-ulosonate + CTP = CMP-3-deoxy-beta-D-manno-octulosonate + diphosphate. The protein operates within nucleotide-sugar biosynthesis; CMP-3-deoxy-D-manno-octulosonate biosynthesis; CMP-3-deoxy-D-manno-octulosonate from 3-deoxy-D-manno-octulosonate and CTP: step 1/1. Its pathway is bacterial outer membrane biogenesis; lipopolysaccharide biosynthesis. In terms of biological role, activates KDO (a required 8-carbon sugar) for incorporation into bacterial lipopolysaccharide in Gram-negative bacteria. This Haemophilus influenzae (strain ATCC 51907 / DSM 11121 / KW20 / Rd) protein is 3-deoxy-manno-octulosonate cytidylyltransferase.